Here is a 419-residue protein sequence, read N- to C-terminus: Transcription factor 7 (419 aa).

The segment covering 1–12 (MPQLDSGGGGAG) has biased composition (gly residues). Residues 1-60 (MPQLDSGGGGAGRGDDLGAPDELLAFQDEGEEQDDKNRDSPVGPERDLAELKSSLVNESE) form a CTNNB1-binding region. Disordered stretches follow at residues 1 to 111 (MPQL…LKAP) and 134 to 200 (PASG…SGFY). 2 stretches are compositionally biased toward basic and acidic residues: residues 35-50 (DKNR…DLAE) and 86-109 (LGRE…DGLK). Positions 143-158 (QPQPPLHNKPGQPPHG) are enriched in pro residues. The segment at residues 304-372 (IKKPLNAFML…LHMQLYPGWS (69 aa)) is a DNA-binding region (HMG box). Residues 374–406 (RDNYGKKKRRSREKHQESTTGGKRNAFGTYPEK) form a disordered region. The short motif at 379-385 (KKKRRSR) is the Nuclear localization signal element.

Belongs to the TCF/LEF family. As to quaternary structure, binds the armadillo repeat of CTNNB1 and forms a stable complex. Binds TLE5, TLE1, TLE2, TLE3 and TLE4. Interacts with MLLT11. Interacts with DAZAP2. Interacts (via N-terminus) with SOX13; inhibits WNT-mediated transcriptional activity. As to expression, T-cell specific. Expressed in triple negative 2 subpopulations of T-cells and both the gamma-delta and alpha-beta T-cell lineages. Expressed in Il7 receptor positive innate-like T-cells in the mesenteric lymph nodes and spleen (at protein level).

The protein resides in the nucleus. Its function is as follows. Transcriptional activator involved in T-cell lymphocyte differentiation. Necessary for the survival of CD4(+) CD8(+) immature thymocytes. Isoforms lacking the N-terminal CTNNB1 binding domain cannot fulfill this role. Binds to the T-lymphocyte-specific enhancer element (5'-WWCAAAG-3') found in the promoter of the CD3E gene. Represses expression of the T-cell receptor gamma gene in alpha-beta T-cell lineages. Inhibits the developmental program of IL17A effector gamma-delta T-cell subsets via regulating the transcription of T-cell lineage effector proteins. Required for the development of natural killer receptor-positive lymphoid tissue inducer T-cells. TLE1, TLE2, TLE3 and TLE4 repress transactivation mediated by TCF7 and CTNNB1. May also act as feedback transcriptional repressor of CTNNB1 and TCF7L2 target genes. In Mus musculus (Mouse), this protein is Transcription factor 7.